The primary structure comprises 653 residues: DNA polymerase (653 aa).

This sequence belongs to the DNA polymerase type-B family.

It catalyses the reaction DNA(n) + a 2'-deoxyribonucleoside 5'-triphosphate = DNA(n+1) + diphosphate. Functionally, replicates viral genomic DNA. The protein is DNA polymerase of Acidianus convivator (ABV).